A 1215-amino-acid polypeptide reads, in one-letter code: RNA-dependent RNA polymerase 1 (1215 aa).

It belongs to the RdRP family. In terms of assembly, cid12, hrr1 and rdp1 interact forming the RNA-directed RNA polymerase complex (RDRC). The RDRC complex interacts with the RITS complex via interaction between ago1 and hrr1. Clr4 has a role in mediating this interaction.

The protein localises to the cytoplasm. The protein resides in the nucleus. Its subcellular location is the chromosome. It localises to the telomere. It is found in the centromere. The enzyme catalyses RNA(n) + a ribonucleoside 5'-triphosphate = RNA(n+1) + diphosphate. Has a role in the RNA interference (RNAi) pathway which is important for heterochromatin formation, accurate chromosome segregation, centromere cohesion and telomere function during mitosis and meiosis. Required for both post-transcriptional and transcriptional gene silencing. Required for silencing at the centromeres and for initiation of transcriptionally silent heterochromatin at the mating type locus. Promotes histone H3 'Lys-10' methylation necessary for centromere function. Required for recruitment of swi6 and cohesin to an ectopic dg repeat. A member of the RNA-directed RNA polymerase complex (RDRC) which is involved in the generation of small interfering RNAs (siRNAs) and mediates their association with the RNA-induced transcriptional silencing (RITS) complex. RITS acts as a priming complex for dsRNA synthesis at the site of non-coding centromeric RNA. Its RNA-dependent RNA polymerase activity is critical in siRNA production necessary for heterochromatin formation. This Schizosaccharomyces pombe (strain 972 / ATCC 24843) (Fission yeast) protein is RNA-dependent RNA polymerase 1 (rdp1).